The primary structure comprises 330 residues: Inositol 2-dehydrogenase (330 aa).

This sequence belongs to the Gfo/Idh/MocA family.

It carries out the reaction myo-inositol + NAD(+) = scyllo-inosose + NADH + H(+). It participates in polyol metabolism; myo-inositol degradation into acetyl-CoA; acetyl-CoA from myo-inositol: step 1/7. Involved in the oxidation of myo-inositol (MI) to 2-keto-myo-inositol (2KMI or 2-inosose). The chain is Inositol 2-dehydrogenase (idhA) from Rhizobium meliloti (strain 1021) (Ensifer meliloti).